The chain runs to 536 residues: Protoporphyrinogen oxidase, chloroplastic (536 aa).

The N-terminal 36 residues, 1-36 (MAAAAAAMATATSATAAPPLRIRDAARRTRRRGHVR), are a transit peptide targeting the chloroplast. FAD is bound by residues 62–67 (GGGISG), 87–88 (EA), and 111–114 (GPNS). The segment at 248–272 (TIKTIQERGKNPKPPRDPRLPTPKG) is disordered. A compositionally biased stretch (basic and acidic residues) spans 252-266 (IQERGKNPKPPRDPR). Residue 510-512 (VAL) participates in FAD binding.

The protein belongs to the protoporphyrinogen/coproporphyrinogen oxidase family. Protoporphyrinogen oxidase subfamily. It depends on FAD as a cofactor.

The protein resides in the plastid. It is found in the chloroplast. It catalyses the reaction protoporphyrinogen IX + 3 O2 = protoporphyrin IX + 3 H2O2. It functions in the pathway porphyrin-containing compound metabolism; protoporphyrin-IX biosynthesis; protoporphyrin-IX from protoporphyrinogen-IX: step 1/1. It participates in porphyrin-containing compound metabolism; chlorophyll biosynthesis. Catalyzes the 6-electron oxidation of protoporphyrinogen-IX to form protoporphyrin-IX. The chain is Protoporphyrinogen oxidase, chloroplastic (PPOX1) from Oryza sativa subsp. japonica (Rice).